A 149-amino-acid polypeptide reads, in one-letter code: Large ribosomal subunit protein eL8 (149 aa).

This sequence belongs to the eukaryotic ribosomal protein eL8 family. In terms of assembly, part of the 50S ribosomal subunit. Probably part of the RNase P complex.

It is found in the cytoplasm. Functionally, multifunctional RNA-binding protein that recognizes the K-turn motif in ribosomal RNA, the RNA component of RNase P, box H/ACA, box C/D and box C'/D' sRNAs. The sequence is that of Large ribosomal subunit protein eL8 from Pyrobaculum calidifontis (strain DSM 21063 / JCM 11548 / VA1).